Consider the following 318-residue polypeptide: Basic leucine zipper (bZIP) transcription factor atfB (318 aa).

Disordered regions lie at residues 79 to 100 (LKNT…KKLQ) and 114 to 164 (FNSS…EKRE). The segment at 160–199 (REKREKFLERNRLAASKCRQKKKEHTKLLETRFREVSSKK) is basic motif. One can recognise a bZIP domain in the interval 160–223 (REKREKFLER…LNLKNEMLRH (64 aa)). The leucine-zipper stretch occupies residues 202-216 (LESEIEHLRSEVLNL). Positions 247–304 (TPNRDLVSPMRSPEQMTASTPHGLSFGFDGPMQLPSEMGSPLDQRRDSEQSIMTESSY) are disordered.

The protein belongs to the bZIP family. ATF subfamily.

The protein localises to the nucleus. Transcription factor that acts as a key player in the regulatory circuit that integrates secondary metabolism and cellular response to oxidative stress. Regulates the genes involved in development, stress response, and secondary metabolism through direct binding to their promoters. Particularly involved in the resistance to oxidative stress in asexual conidiospores. Binds aflatoxin gene promoters carrying the cAMP-response element (CRE1) under aflatoxin-inducing conditions. The protein is Basic leucine zipper (bZIP) transcription factor atfB of Aspergillus parasiticus (strain ATCC 56775 / NRRL 5862 / SRRC 143 / SU-1).